A 382-amino-acid polypeptide reads, in one-letter code: GDP-mannose transporter 1 (382 aa).

The Cytoplasmic portion of the chain corresponds to 1-40 (MADDKKTNEYTVEMDKLDHGNKNFEAPAPAVRPRGPPAAQ). A helical transmembrane segment spans residues 41–61 (LANNPILPVLAYCGSSILMTV). At 62–71 (MNKYVLSGTD) the chain is on the lumenal side. A helical membrane pass occupies residues 72 to 92 (FNLNFFLLCVQSIVCIVAIQT). Over 93-110 (CKSSKLITYRDFNSDEAK) the chain is Cytoplasmic. A helical membrane pass occupies residues 111–127 (KWFPITLLLIGMIYTGS). At 128 to 134 (KALQYLS) the chain is on the lumenal side. The helical transmembrane segment at 135–151 (IPVYTIFKNLTIILIAY) threads the bilayer. The Cytoplasmic segment spans residues 152–160 (GEVLWFGGS). The helical transmembrane segment at 161–182 (VTGMTLFSFGLMVLSSIIAAWA) threads the bilayer. Residues 183-200 (DIKHAVESSGDATAKVST) are Lumenal-facing. The chain crosses the membrane as a helical span at residues 201 to 221 (LNAGYIWMLINCLCTSSYVLG). Topologically, residues 222–233 (MRKRIKLTNFKD) are cytoplasmic. Residues 234-254 (FDTMFYNNLLSIPVLLVLTFL) traverse the membrane as a helical segment. Topologically, residues 255–274 (MEDWSSANIARNFPPADRNG) are lumenal. Residues 275 to 295 (ILFAMILSGLSSVFISYTSAW) traverse the membrane as a helical segment. Residues 296–303 (CVRVTSST) are Cytoplasmic-facing. The chain crosses the membrane as a helical span at residues 304-324 (TYSMVGALNKLPIALSGLIFF). The Lumenal portion of the chain corresponds to 325–327 (DAP). Residues 328-348 (VTFPSVSAIVVGFISGIVYAV) traverse the membrane as a helical segment. Over 349–382 (AKIKQSAKPKTGVLPMSNPPVSASSQSMRDSLRS) the chain is Cytoplasmic. Positions 358–382 (KTGVLPMSNPPVSASSQSMRDSLRS) are disordered. Polar residues predominate over residues 367–382 (PPVSASSQSMRDSLRS).

This sequence belongs to the TPT transporter family. SLC35D subfamily. As to quaternary structure, homooligomer.

It is found in the golgi apparatus membrane. Its subcellular location is the cytoplasmic vesicle membrane. It localises to the endoplasmic reticulum membrane. Functionally, involved in the import of GDP-mannose from the cytoplasm into the Golgi lumen. The chain is GDP-mannose transporter 1 (gmt1) from Neosartorya fischeri (strain ATCC 1020 / DSM 3700 / CBS 544.65 / FGSC A1164 / JCM 1740 / NRRL 181 / WB 181) (Aspergillus fischerianus).